The sequence spans 313 residues: uncharacterized protein (313 aa).

The first 24 residues, 1 to 24 (MKRRRRWRGWLLFLALCFCLLCEA), serve as a signal peptide directing secretion. 14 N-linked (GlcNAc...) asparagine; by host glycosylation sites follow: asparagine 28, asparagine 43, asparagine 57, asparagine 77, asparagine 101, asparagine 102, asparagine 109, asparagine 149, asparagine 168, asparagine 215, asparagine 222, asparagine 251, asparagine 254, and asparagine 267. The tract at residues 47–73 (ATTGTTTTSPNVTSTTSNTVTTPTTVS) is disordered. Over residues 90–114 (STVSGTRNTRNNNTTTIGTNATSPS) the composition is skewed to low complexity. Positions 90–117 (STVSGTRNTRNNNTTTIGTNATSPSSSV) are disordered.

Belongs to the HHV-5 US34A protein family.

This is an uncharacterized protein from Homo sapiens (Human).